The primary structure comprises 87 residues: Defensin-like protein 223 (87 aa).

The N-terminal stretch at 1–34 (MKSTIFVLTLLIFVSLYFNIIVYVSFSFIGTSEI) is a signal peptide. Intrachain disulfides connect C55–C72, C58–C77, and C62–C79.

The protein belongs to the DEFL family.

It localises to the secreted. The sequence is that of Defensin-like protein 223 from Arabidopsis thaliana (Mouse-ear cress).